A 163-amino-acid polypeptide reads, in one-letter code: NADH-quinone oxidoreductase subunit I (163 aa).

4Fe-4S ferredoxin-type domains are found at residues 54–84 (LRRYPNGEERCIACKLCEAVCPANAITIESE) and 94–123 (IVYDIDLFKCIFCGFCEEACPVDAIVETQI). Residues cysteine 64, cysteine 67, cysteine 70, cysteine 74, cysteine 103, cysteine 106, cysteine 109, and cysteine 113 each contribute to the [4Fe-4S] cluster site.

Belongs to the complex I 23 kDa subunit family. In terms of assembly, NDH-1 is composed of 14 different subunits. Subunits NuoA, H, J, K, L, M, N constitute the membrane sector of the complex. It depends on [4Fe-4S] cluster as a cofactor.

Its subcellular location is the cell inner membrane. The catalysed reaction is a quinone + NADH + 5 H(+)(in) = a quinol + NAD(+) + 4 H(+)(out). Functionally, NDH-1 shuttles electrons from NADH, via FMN and iron-sulfur (Fe-S) centers, to quinones in the respiratory chain. The immediate electron acceptor for the enzyme in this species is believed to be ubiquinone. Couples the redox reaction to proton translocation (for every two electrons transferred, four hydrogen ions are translocated across the cytoplasmic membrane), and thus conserves the redox energy in a proton gradient. The sequence is that of NADH-quinone oxidoreductase subunit I from Ruthia magnifica subsp. Calyptogena magnifica.